We begin with the raw amino-acid sequence, 199 residues long: NAD(P)H dehydrogenase (quinone) (199 aa).

The Flavodoxin-like domain maps to 4-190 (VLVLYYSAYG…AGARYQGRQI (187 aa)). Residues 10 to 15 (SAYGHI) and 78 to 80 (TRF) contribute to the FMN site. Tyr12 provides a ligand contact to NAD(+). Substrate is bound at residue Trp98. FMN contacts are provided by residues 113–119 (SSATQHG) and His134.

It belongs to the WrbA family. It depends on FMN as a cofactor.

The catalysed reaction is a quinone + NADH + H(+) = a quinol + NAD(+). The enzyme catalyses a quinone + NADPH + H(+) = a quinol + NADP(+). This Bradyrhizobium diazoefficiens (strain JCM 10833 / BCRC 13528 / IAM 13628 / NBRC 14792 / USDA 110) protein is NAD(P)H dehydrogenase (quinone).